Here is a 1598-residue protein sequence, read N- to C-terminus: Structural maintenance of chromosomes flexible hinge domain-containing protein GMI1 (1598 aa).

The segment at 1191-1218 is disordered; sequence VTSAPTSEREESGYSTPHSKTTPPPESG. 2 coiled-coil regions span residues 1258 to 1301 and 1565 to 1595; these read TEDL…ASLE and EEMMTEENRSLRRLVKKLKKANEKYQNFTAM.

In terms of tissue distribution, highly expressed in closed buds and open flowers. Expressed at low levels in roots, stems, cauline leaves and siliques. Expressed in the region of the shoot and floral meristems.

The protein localises to the nucleus. In terms of biological role, contributes to DNA double-strand break (DSB) repair via somatic homologous recombination. Functions downstream of ATM. This is Structural maintenance of chromosomes flexible hinge domain-containing protein GMI1 from Arabidopsis thaliana (Mouse-ear cress).